The primary structure comprises 463 residues: Phosphomannomutase/phosphoglucomutase (463 aa).

The active-site Phosphoserine intermediate is Ser108. Residues Ser108, Asp242, Asp244, and Asp246 each coordinate Mg(2+). Substrate contacts are provided by Glu325, Ser327, and His329.

It belongs to the phosphohexose mutase family. Monomer. Mg(2+) serves as cofactor.

The catalysed reaction is alpha-D-mannose 1-phosphate = D-mannose 6-phosphate. It catalyses the reaction alpha-D-glucose 1-phosphate = alpha-D-glucose 6-phosphate. It participates in nucleotide-sugar biosynthesis; GDP-alpha-D-mannose biosynthesis; alpha-D-mannose 1-phosphate from D-fructose 6-phosphate: step 2/2. The protein operates within bacterial outer membrane biogenesis; lipopolysaccharide biosynthesis. In terms of biological role, the phosphomannomutase activity produces a precursor for alginate polymerization. The alginate layer causes a mucoid phenotype and provides a protective barrier against host immune defenses and antibiotics. Also involved in core-LPS biosynthesis due to its phosphoglucomutase activity. Essential for biofilm production. The polypeptide is Phosphomannomutase/phosphoglucomutase (algC) (Pseudomonas putida (strain ATCC 47054 / DSM 6125 / CFBP 8728 / NCIMB 11950 / KT2440)).